We begin with the raw amino-acid sequence, 734 residues long: Photosystem I P700 chlorophyll a apoprotein A2 (734 aa).

8 consecutive transmembrane segments (helical) span residues 46-69 (IFASHFGQLAIIFLWTSGNLFHVA), 135-158 (LYNGSMFLLFIATLALFAGWLHLE), 175-199 (LNHHLSALFGLSSLAWSGHLIHVAI), 273-291 (IAHHHLAIAVLFIVAGHMY), 330-353 (LHFQLGLALASLGVITSLVAQHMY), 369-395 (AALYTHHQYIAGFIMTGAFAHGAIFFI), 417-439 (AIISHLSWVTLFLGFHTLGLYVH), and 517-535 (FLVHHAIALGLHTTTLILV). [4Fe-4S] cluster is bound by residues cysteine 559 and cysteine 568. A run of 2 helical transmembrane segments spans residues 575–596 (AFYLAVFWMLNTIGWTTFYWHW) and 643–665 (LAVWGWMFLFGHLVWATGFMFLI). Residues histidine 654, methionine 662, and tyrosine 670 each coordinate chlorophyll a. Residue tryptophan 671 coordinates phylloquinone. The chain crosses the membrane as a helical span at residues 707–727 (LVGLAHFSVGYVFTYAAFLIA).

This sequence belongs to the PsaA/PsaB family. In terms of assembly, the PsaA/B heterodimer binds the P700 chlorophyll special pair and subsequent electron acceptors. PSI consists of a core antenna complex that captures photons, and an electron transfer chain that converts photonic excitation into a charge separation. The eukaryotic PSI reaction center is composed of at least 11 subunits. The cofactor is P700 is a chlorophyll a/chlorophyll a' dimer, A0 is one or more chlorophyll a, A1 is one or both phylloquinones and FX is a shared 4Fe-4S iron-sulfur center..

It is found in the plastid. The protein localises to the chloroplast thylakoid membrane. It carries out the reaction reduced [plastocyanin] + hnu + oxidized [2Fe-2S]-[ferredoxin] = oxidized [plastocyanin] + reduced [2Fe-2S]-[ferredoxin]. In terms of biological role, psaA and PsaB bind P700, the primary electron donor of photosystem I (PSI), as well as the electron acceptors A0, A1 and FX. PSI is a plastocyanin/cytochrome c6-ferredoxin oxidoreductase, converting photonic excitation into a charge separation, which transfers an electron from the donor P700 chlorophyll pair to the spectroscopically characterized acceptors A0, A1, FX, FA and FB in turn. Oxidized P700 is reduced on the lumenal side of the thylakoid membrane by plastocyanin or cytochrome c6. The chain is Photosystem I P700 chlorophyll a apoprotein A2 from Euglena gracilis.